The following is a 70-amino-acid chain: Protein SlyX homolog (70 aa).

The protein belongs to the SlyX family.

This Shewanella sp. (strain MR-7) protein is Protein SlyX homolog.